Here is a 703-residue protein sequence, read N- to C-terminus: Phenylalanine aminomutase (L-beta-phenylalanine forming) (703 aa).

Tyr-79 functions as the Proton donor/acceptor in the catalytic mechanism. A cross-link (5-imidazolinone (Ala-Gly)) is located at residues Ala-177–Gly-179. Residue Ser-178 is modified to 2,3-didehydroalanine (Ser).

The protein belongs to the PAL/histidase family. In terms of processing, contains an active site 4-methylidene-imidazol-5-one (MIO), which is formed autocatalytically by cyclization and dehydration of residues Ala-Ser-Gly.

It catalyses the reaction L-phenylalanine = L-beta-phenylalanine. The protein operates within mycotoxin biosynthesis. Functionally, phenylalanine aminomutase; part of the gene cluster that mediates the biosynthesis of the mycotoxin cyclochlorotine, a hepatotoxic and carcinogenic cyclic chlorinated pentapeptide. Within the pathway, cctP1 provides the uncommon building block beta-Phe from Phe. The NRPS cctN initially catalyzes the condensation of L-serine (Ser), Pro, L-2-aminobutyrate (2Abu), Ser, and beta-Phe in this order to produce isocyclotine. After the dichlorination of Pro2 catalyzed by cctP2 to produce isocyclochlorotine, the cctO-mediated transacylation of isocyclochlorotine can furnish cyclochlorotine. The subsequent hydroxylation of cyclochlorotine by cctR yields hydroxycyclochlorotine as the final product. CctP1 probably acts as a phenylalanine aminomutase and provides the uncommon building block beta-Phe. Furthermore, 2Abu can be synthesized from threonine by one of the threonine dehydratases and transaminases localized outside of the cluster. The functions of the remaining proteins encoded by the cluster, cctM and cctT, have not been identified yet. This chain is Phenylalanine aminomutase (L-beta-phenylalanine forming), found in Talaromyces islandicus (Penicillium islandicum).